Reading from the N-terminus, the 109-residue chain is Putative double-stranded DNA mimic protein plu2488 (109 aa).

Belongs to the putative dsDNA mimic protein family.

May act as a double-stranded DNA (dsDNA) mimic. Probably regulates the activity of a dsDNA-binding protein. This Photorhabdus laumondii subsp. laumondii (strain DSM 15139 / CIP 105565 / TT01) (Photorhabdus luminescens subsp. laumondii) protein is Putative double-stranded DNA mimic protein plu2488.